Here is a 135-residue protein sequence, read N- to C-terminus: MPKSYTELYFPILLQAVIAMGLAAGLLTVSYLLGKKVRNRVKDMPYESGIVPTGDARHRFSVKFYLVGMLFILFDIEAIFLYPWVVVYRDLSRNGSLFGFYEMLTFVILILSGFFYIWKKGALDWGEPTARPGRK.

Helical transmembrane passes span 9–29, 67–87, and 97–117; these read YFPI…LLTV, VGML…WVVV, and LFGF…FFYI.

Belongs to the complex I subunit 3 family. As to quaternary structure, NDH-1 is composed of 14 different subunits. Subunits NuoA, H, J, K, L, M, N constitute the membrane sector of the complex.

It is found in the cell inner membrane. The enzyme catalyses a quinone + NADH + 5 H(+)(in) = a quinol + NAD(+) + 4 H(+)(out). In terms of biological role, NDH-1 shuttles electrons from NADH, via FMN and iron-sulfur (Fe-S) centers, to quinones in the respiratory chain. The immediate electron acceptor for the enzyme in this species is believed to be ubiquinone. Couples the redox reaction to proton translocation (for every two electrons transferred, four hydrogen ions are translocated across the cytoplasmic membrane), and thus conserves the redox energy in a proton gradient. The protein is NADH-quinone oxidoreductase subunit A of Solibacter usitatus (strain Ellin6076).